The sequence spans 305 residues: Methionyl-tRNA formyltransferase (305 aa).

111 to 114 (SLLP) lines the (6S)-5,6,7,8-tetrahydrofolate pocket.

It belongs to the Fmt family.

It catalyses the reaction L-methionyl-tRNA(fMet) + (6R)-10-formyltetrahydrofolate = N-formyl-L-methionyl-tRNA(fMet) + (6S)-5,6,7,8-tetrahydrofolate + H(+). Functionally, attaches a formyl group to the free amino group of methionyl-tRNA(fMet). The formyl group appears to play a dual role in the initiator identity of N-formylmethionyl-tRNA by promoting its recognition by IF2 and preventing the misappropriation of this tRNA by the elongation apparatus. This Campylobacter jejuni subsp. jejuni serotype O:6 (strain 81116 / NCTC 11828) protein is Methionyl-tRNA formyltransferase.